An 847-amino-acid polypeptide reads, in one-letter code: Glucans biosynthesis glucosyltransferase H (847 aa).

Residues 1–138 (MNKTTEYIDA…KWRTVGTIRR (138 aa)) lie on the Cytoplasmic side of the membrane. A helical transmembrane segment spans residues 139–156 (YILLILTLAQTVVATWYM). Residues 157-193 (KTILPYQGWALINPMDMVGQDIWVSFMQLLPYMLQTG) lie on the Periplasmic side of the membrane. The helical transmembrane segment at 194–216 (ILILFAVLFCWVSAGFWTALMGF) threads the bilayer. The Cytoplasmic portion of the chain corresponds to 217-511 (LQLLIGRDKY…LVKGMHPVHR (295 aa)). The chain crosses the membrane as a helical span at residues 512–534 (AVFLTGVMSYLSAPLWFMFLALS). The Periplasmic segment spans residues 535 to 567 (TALQVVHALTEPQYFLQPRQLFPVWPQWRPELA). The helical transmembrane segment at 568–590 (IALFASTMVLLFLPKLLSIMLIW) threads the bilayer. Over 591–602 (CKGTKEYGGFWR) the chain is Cytoplasmic. The helical transmembrane segment at 603–625 (VTLSLLLEVLFSVLLAPVRMLFH) threads the bilayer. Residues 626–679 (TVFVVSAFLGWEVVWNSPQRDDDSTPWGEAFMRHGSQLLLGLVWAVGMAWLDLR) are Periplasmic-facing. The helical transmembrane segment at 680–702 (FLFWLAPIVFSLILSPFVSVISS) threads the bilayer. At 703–847 (RSTVGLRTKR…ALQGRTSSAG (145 aa)) the chain is on the cytoplasmic side.

It belongs to the glycosyltransferase 2 family. OpgH subfamily.

Its subcellular location is the cell inner membrane. It participates in glycan metabolism; osmoregulated periplasmic glucan (OPG) biosynthesis. Its function is as follows. Involved in the biosynthesis of osmoregulated periplasmic glucans (OPGs). This chain is Glucans biosynthesis glucosyltransferase H, found in Salmonella typhi.